We begin with the raw amino-acid sequence, 159 residues long: D-aminoacyl-tRNA deacylase (159 aa).

Positions 142–143 match the Gly-cisPro motif, important for rejection of L-amino acids motif; it reads GP.

This sequence belongs to the DTD family. In terms of assembly, homodimer.

The protein resides in the cytoplasm. The catalysed reaction is glycyl-tRNA(Ala) + H2O = tRNA(Ala) + glycine + H(+). It catalyses the reaction a D-aminoacyl-tRNA + H2O = a tRNA + a D-alpha-amino acid + H(+). Functionally, an aminoacyl-tRNA editing enzyme that deacylates mischarged D-aminoacyl-tRNAs. Also deacylates mischarged glycyl-tRNA(Ala), protecting cells against glycine mischarging by AlaRS. Acts via tRNA-based rather than protein-based catalysis; rejects L-amino acids rather than detecting D-amino acids in the active site. By recycling D-aminoacyl-tRNA to D-amino acids and free tRNA molecules, this enzyme counteracts the toxicity associated with the formation of D-aminoacyl-tRNA entities in vivo and helps enforce protein L-homochirality. The sequence is that of D-aminoacyl-tRNA deacylase from Albidiferax ferrireducens (strain ATCC BAA-621 / DSM 15236 / T118) (Rhodoferax ferrireducens).